Consider the following 708-residue polypeptide: Polyribonucleotide nucleotidyltransferase (708 aa).

2 residues coordinate Mg(2+): D486 and D492. The KH domain occupies 553–612; that stretch reads PRITTIKVPPQKVREVIGSGGKVIREITEVTGTKIDIEDDGTIKIASADAEATQRAVDWI. The S1 motif domain maps to 622-690; it reads GVVYTGKVVK…DRGKIKLSMK (69 aa).

The protein belongs to the polyribonucleotide nucleotidyltransferase family. Requires Mg(2+) as cofactor.

The protein resides in the cytoplasm. The enzyme catalyses RNA(n+1) + phosphate = RNA(n) + a ribonucleoside 5'-diphosphate. In terms of biological role, involved in mRNA degradation. Catalyzes the phosphorolysis of single-stranded polyribonucleotides processively in the 3'- to 5'-direction. This is Polyribonucleotide nucleotidyltransferase from Rhodospirillum rubrum (strain ATCC 11170 / ATH 1.1.1 / DSM 467 / LMG 4362 / NCIMB 8255 / S1).